A 2327-amino-acid chain; its full sequence is Nonribosomal peptide synthetase apmB (2327 aa).

The tract at residues 214-605 (DTQAKSRPDS…GRKDMQIKLR (392 aa)) is adenylation 1. The 77-residue stretch at 734-810 (EPATATGKVL…EMADACTKVI (77 aa)) folds into the Carrier 1 domain. Position 771 is an O-(pantetheine 4'-phosphoryl)serine (Ser-771). The tract at residues 845 to 1259 (EDLYPCTAMQ…IFISSKDQES (415 aa)) is condensation 1. The interval 1281 to 1675 (ERIAERPDHE…RRKDTQVKLR (395 aa)) is adenylation 2. The Carrier 2 domain maps to 1816 to 1892 (PPTTDMQITM…AISAVAETLS (77 aa)). At Ser-1853 the chain carries O-(pantetheine 4'-phosphoryl)serine. Residues 1937 to 2260 (TDFQSLAING…VFQYQDFGGE (324 aa)) are condensation 2. Positions 2299–2327 (RVDLPRRPSPAGDTRDGPTAASDSPSRAR) are disordered.

The protein belongs to the NRP synthetase family.

The catalysed reaction is N-benzoyl-L-phenylalaninol + benzoate + L-phenylalanine + 2 ATP = asperphenamate + 2 AMP + 2 diphosphate + H(+). The protein operates within secondary metabolite biosynthesis. Its function is as follows. Nonribosomal peptide synthetase; part of the gene cluster that mediates the biosynthesis of asperphenamate, a rare linear amino acid ester that exhibits antitumor activity towards a number of cell lines. The structure of asperphenamate contains two subunits, N-benzoylphenylalanine and N-benzoylphenylalaninol, which are connected by an inter-molecular ester bond. The first step of asperphenamate biosynthesis is the generation of N-benzoylphenylalaninol by the nonribosomal peptide synthase apmA. Using phenylalanine and benzoic acid as substrates, apmA catalyzes amide bond formation and tethers the intermediate into the NRPS chain. Then, the terminal R domain of apmA catalyzes the reduction reaction to get the shunt product N-benzoylphenylalaninol. Subsequently, the nonribosomal peptide synthase apmB activates the same substrates as does apmA (phenylalanine and benzoic acid) to produce N-benzoylphenylalanine before condensing N-benzoylphenylalanine and N-benzoylphenylalaninol to release asperphenamate. This chain is Nonribosomal peptide synthetase apmB, found in Penicillium brevicompactum.